Reading from the N-terminus, the 377-residue chain is Pseudouridylate synthase RPUSD4, mitochondrial (377 aa).

The N-terminal 35 residues, 1-35 (MAAPLLGSPGLQVLSMSSRTGKLFTPSSRSFCSRA), are a transit peptide targeting the mitochondrion. The active site involves D153.

The protein belongs to the pseudouridine synthase RluA family. As to quaternary structure, interacts with 16S mt-rRNA, mt-tRNA(Phe) and mt-tRNA(Met). Forms a regulatory protein-RNA complex, consisting of RCC1L, NGRN, RPUSD3, RPUSD4, TRUB2, FASTKD2 and 16S mt-rRNA.

It is found in the mitochondrion matrix. The protein localises to the nucleus. It localises to the cytoplasm. The catalysed reaction is uridine in 5S rRNA = pseudouridine in 5S rRNA. It catalyses the reaction a uridine in tRNA = a pseudouridine in tRNA. It carries out the reaction a uridine in mRNA = a pseudouridine in mRNA. Its function is as follows. Catalyzes uridine to pseudouridine isomerization (pseudouridylation) of different mitochondrial RNA substrates. Acts on position 1397 in 16S mitochondrial ribosomal RNA (16S mt-rRNA). This modification is required for the assembly of 16S mt-rRNA into a functional mitochondrial ribosome. As a component of a functional protein-RNA module, consisting of RCC1L, NGRN, RPUSD3, RPUSD4, TRUB2, FASTKD2 and 16S mt-rRNA, controls 16S mt-rRNA abundance and is required for intra-mitochondrial translation. Acts on position 39 in mitochondrial tRNA(Phe). Also catalyzes pseudouridylation of mRNAs in nucleus: acts as a regulator of pre-mRNA splicing by mediating pseudouridylation of pre-mRNAs at locations associated with alternatively spliced regions. Pseudouridylation of pre-mRNAs near splice sites directly regulates mRNA splicing and mRNA 3'-end processing. The polypeptide is Pseudouridylate synthase RPUSD4, mitochondrial (Rattus norvegicus (Rat)).